A 127-amino-acid chain; its full sequence is Stationary phase protein 3 (127 aa).

A run of 2 helical transmembrane segments spans residues 29 to 49 (LFLF…FYVI) and 63 to 83 (ANSI…CFFL). N-linked (GlcNAc...) asparagine glycosylation is present at Asn86.

It is found in the membrane. Required for survival during stationary phase. This is Stationary phase protein 3 (SPG3) from Saccharomyces cerevisiae (strain ATCC 204508 / S288c) (Baker's yeast).